Here is a 360-residue protein sequence, read N- to C-terminus: Homoserine O-acetyltransferase (360 aa).

Residues 41-344 (NAILICHALT…DYGHDAFLVD (304 aa)) form the AB hydrolase-1 domain. S144 (nucleophile) is an active-site residue. R213 contacts substrate. Active-site residues include D305 and H338. Residue D339 coordinates substrate.

It belongs to the AB hydrolase superfamily. MetX family. As to quaternary structure, homodimer.

Its subcellular location is the cytoplasm. It catalyses the reaction L-homoserine + acetyl-CoA = O-acetyl-L-homoserine + CoA. It functions in the pathway amino-acid biosynthesis; L-methionine biosynthesis via de novo pathway; O-acetyl-L-homoserine from L-homoserine: step 1/1. Transfers an acetyl group from acetyl-CoA to L-homoserine, forming acetyl-L-homoserine. The protein is Homoserine O-acetyltransferase of Pasteurella multocida (strain Pm70).